The chain runs to 522 residues: BTB/POZ domain-containing protein 16 (522 aa).

A BTB domain is found at 166–222 (INDPAVTRVAFALALKNLYMKEVEMTVDNVLGVLASAHILQFNRLFQKCVNMMMNRL).

The polypeptide is BTB/POZ domain-containing protein 16 (Btbd16) (Mus musculus (Mouse)).